A 361-amino-acid polypeptide reads, in one-letter code: DNA replication and repair protein RecF (361 aa).

30 to 37 contributes to the ATP binding site; it reads GQNAQGKT.

Belongs to the RecF family.

Its subcellular location is the cytoplasm. In terms of biological role, the RecF protein is involved in DNA metabolism; it is required for DNA replication and normal SOS inducibility. RecF binds preferentially to single-stranded, linear DNA. It also seems to bind ATP. This is DNA replication and repair protein RecF from Streptococcus gordonii (strain Challis / ATCC 35105 / BCRC 15272 / CH1 / DL1 / V288).